Consider the following 320-residue polypeptide: Cytochrome c biogenesis protein CcsA (320 aa).

A run of 8 helical transmembrane segments spans residues 9–29, 44–64, 71–91, 99–119, 144–164, 226–246, 261–281, and 287–307; these read ILIHISFSVVSIVITIYFLTL, GMIVTFFCITGLLAARWIYSG, LYESLIFLSWSFSIIHMVCYF, LNAITGPSAILTQGFATSGLL, MVLGYAALLCGSLLSVALLVI, IISLGFIFLTIGILSGAVWAN, WAFITWTIFAIYLHIRTNINL, and AIVASMGFLIIWICYFGVNLL.

Belongs to the CcmF/CycK/Ccl1/NrfE/CcsA family. In terms of assembly, may interact with Ccs1.

The protein resides in the plastid. It localises to the chloroplast thylakoid membrane. Its function is as follows. Required during biogenesis of c-type cytochromes (cytochrome c6 and cytochrome f) at the step of heme attachment. The protein is Cytochrome c biogenesis protein CcsA of Carica papaya (Papaya).